A 146-amino-acid polypeptide reads, in one-letter code: General odorant-binding protein 19a (146 aa).

An N-terminal signal peptide occupies residues 1–22; it reads MKFHLLLVCVAISLGPIPQSEA. Cystine bridges form between cysteine 40–cysteine 72, cysteine 68–cysteine 126, and cysteine 113–cysteine 135.

It belongs to the PBP/GOBP family. As to expression, expressed in adult olfactory system. Expressed exclusively in a subset of chemosensory sensilla on the third antennal segment.

It localises to the secreted. Present in the aqueous fluid surrounding olfactory sensory dendrites and are thought to aid in the capture and transport of hydrophobic odorants into and through this fluid. This Drosophila melanogaster (Fruit fly) protein is General odorant-binding protein 19a (Obp19a).